We begin with the raw amino-acid sequence, 194 residues long: MEETFQLLYDTYHQDLYQFLFYMVKDKNQTEDLLQEVYIRVLNSYHTFEGRSSEKTWLLSIARHVAIDWFRKQQTIRQRILGTFDWDTQDVRDQQLLPDELAVQHENVREIYAALDQCTIDQRAVIILRFIQGYSIQETAKALRFSESKVKTTQHRGLKVLRKHMELLREELMDDEVRMERRTDKGVVKSTSGS.

The Polymerase core binding motif lies at 32–45; it reads DLLQEVYIRVLNSY. The H-T-H motif DNA-binding region spans 136–155; it reads IQETAKALRFSESKVKTTQH.

The protein belongs to the sigma-70 factor family. ECF subfamily. As to quaternary structure, interacts transiently with the RNAP core.

The protein localises to the cell membrane. Sigma factors are initiation factors that promote the attachment of RNA polymerase (RNAP) to specific initiation sites and are then released. May be involved in the regulation of iron metabolism. Associates with RNAP core during early growth phases, association decreases as cells age. This Bacillus subtilis (strain 168) protein is ECF RNA polymerase sigma factor SigX (sigX).